A 164-amino-acid polypeptide reads, in one-letter code: PTS system sorbose-specific EIIB component (164 aa).

In terms of domain architecture, PTS EIIB type-4 spans 1 to 164; it reads MIITLARVDD…AKIDEVFGKE (164 aa). His-14 acts as the Pros-phosphohistidine intermediate in catalysis. His-14 carries the post-translational modification Phosphohistidine; by EIIA.

The protein localises to the cytoplasm. It carries out the reaction keto-L-sorbose(out) + N(pros)-phospho-L-histidyl-[protein] = L-sorbose 1-phosphate(in) + L-histidyl-[protein]. In terms of biological role, the phosphoenolpyruvate-dependent sugar phosphotransferase system (PTS), a major carbohydrate active transport system, catalyzes the phosphorylation of incoming sugar substrates concomitant with their translocation across the cell membrane. The enzyme II SorABCD PTS system is involved in L-sorbose transport. This is PTS system sorbose-specific EIIB component from Lacticaseibacillus casei (Lactobacillus casei).